A 486-amino-acid chain; its full sequence is NADH-quinone oxidoreductase subunit N (486 aa).

A run of 14 helical transmembrane segments spans residues 8 to 28 (LIALLPFLILLLTVVIVILSI), 36 to 56 (FIAFLTIISLIVSLCSLYFLI), 74 to 94 (ILYISMIIISSIATCVFAYPW), 104 to 124 (EFYLLTLISTLGAIFLTISNH), 125 to 145 (MASLFISVELMSLPIFGLIAY), 160 to 180 (LVLSGVSSSFLLLGISWIYAI), 204 to 224 (VLFGIIMVLMSFFFKLSMVPF), 239 to 259 (VLSFFSVSGKIAIFSILLYFF), 270 to 290 (IFLILSLISFFSILFGNLMAI), 298 to 318 (FFGYSSISQIGYLLIILLVSK), 329 to 349 (GIFLLNYLCTNIVYFGVINLF), 374 to 394 (ASIVTIVLLSLGGIPITLGFF), 407 to 427 (HLWTIGASFLIGTILGLYGYL), and 459 to 479 (ILIFISGIMLLILGIYPNPLI).

Belongs to the complex I subunit 2 family. As to quaternary structure, NDH-1 is composed of 13 different subunits. Subunits NuoA, H, J, K, L, M, N constitute the membrane sector of the complex.

The protein resides in the cell membrane. The catalysed reaction is a quinone + NADH + 5 H(+)(in) = a quinol + NAD(+) + 4 H(+)(out). Its function is as follows. NDH-1 shuttles electrons from NADH, via FMN and iron-sulfur (Fe-S) centers, to quinones in the respiratory chain. The immediate electron acceptor for the enzyme in this species is believed to be ubiquinone. Couples the redox reaction to proton translocation (for every two electrons transferred, four hydrogen ions are translocated across the cytoplasmic membrane), and thus conserves the redox energy in a proton gradient. The polypeptide is NADH-quinone oxidoreductase subunit N (Buchnera aphidicola subsp. Schizaphis graminum (strain Sg)).